We begin with the raw amino-acid sequence, 174 residues long: ATP-dependent protease subunit HslV (174 aa).

The active site involves threonine 2. Na(+) contacts are provided by glycine 157, cysteine 160, and threonine 163.

This sequence belongs to the peptidase T1B family. HslV subfamily. In terms of assembly, a double ring-shaped homohexamer of HslV is capped on each side by a ring-shaped HslU homohexamer. The assembly of the HslU/HslV complex is dependent on binding of ATP.

The protein resides in the cytoplasm. It carries out the reaction ATP-dependent cleavage of peptide bonds with broad specificity.. Allosterically activated by HslU binding. Protease subunit of a proteasome-like degradation complex believed to be a general protein degrading machinery. The sequence is that of ATP-dependent protease subunit HslV from Shewanella woodyi (strain ATCC 51908 / MS32).